The following is a 386-amino-acid chain: MSFPADSVGLVTPQKFQFEEPLHLECGRVLPRFELMVETYGTLNADKSNAILICHALSGHHHAAGYHHEDDKKAGWWDSCIGPGKAIDTNKFFVVALNNIGGCSGSTGPTSPNPENDNRPYGPDFPLVTVRDWVKTQAMLSDRLGISVWYAVVGGSLGGMQALQWSVDYPDRLQKCVVIASAPKLSAQNIAFNEVARQSILSDPDFHHGRYLENDSYPKRGLILARMVGHITYLSEEAMKQKFGRDLKSGKFMYGFDVEFQVESYLRYQGEQFSRNFDADTYLIMTKALDYFDPSREYGHSLTEAMSKTKCQFLIVSFTTDWRFAPSRSQEIVDALITNHKPVSYLDIDAEQGHDSFLFPIPLYVKTLRAFLGGEEHLKSTSLEAS.

Residues Asn-49 to Leu-358 enclose the AB hydrolase-1 domain. Ser-156 functions as the Nucleophile in the catalytic mechanism. Arg-226 provides a ligand contact to substrate. Residues Asp-321 and His-354 contribute to the active site. Residue Asp-355 coordinates substrate.

This sequence belongs to the AB hydrolase superfamily. MetX family. As to quaternary structure, homodimer.

It is found in the cytoplasm. The catalysed reaction is L-homoserine + succinyl-CoA = O-succinyl-L-homoserine + CoA. The protein operates within amino-acid biosynthesis; L-methionine biosynthesis via de novo pathway; O-succinyl-L-homoserine from L-homoserine: step 1/1. Its function is as follows. Transfers a succinyl group from succinyl-CoA to L-homoserine, forming succinyl-L-homoserine. This Acinetobacter baumannii (strain SDF) protein is Homoserine O-succinyltransferase.